The sequence spans 81 residues: Sulfur carrier protein TusA (81 aa).

Cys19 (cysteine persulfide intermediate) is an active-site residue.

The protein belongs to the sulfur carrier protein TusA family.

The protein resides in the cytoplasm. Functionally, sulfur carrier protein which probably makes part of a sulfur-relay system. This Shewanella baltica (strain OS185) protein is Sulfur carrier protein TusA.